Consider the following 128-residue polypeptide: Ribosome-binding factor A (128 aa).

The protein belongs to the RbfA family. Monomer. Binds 30S ribosomal subunits, but not 50S ribosomal subunits or 70S ribosomes.

The protein localises to the cytoplasm. Its function is as follows. One of several proteins that assist in the late maturation steps of the functional core of the 30S ribosomal subunit. Associates with free 30S ribosomal subunits (but not with 30S subunits that are part of 70S ribosomes or polysomes). Required for efficient processing of 16S rRNA. May interact with the 5'-terminal helix region of 16S rRNA. This Microcystis aeruginosa (strain NIES-843 / IAM M-2473) protein is Ribosome-binding factor A.